The following is a 126-amino-acid chain: Large ribosomal subunit protein bL12 (126 aa).

It belongs to the bacterial ribosomal protein bL12 family. As to quaternary structure, homodimer. Part of the ribosomal stalk of the 50S ribosomal subunit. Forms a multimeric L10(L12)X complex, where L10 forms an elongated spine to which 2 to 4 L12 dimers bind in a sequential fashion. Binds GTP-bound translation factors.

Functionally, forms part of the ribosomal stalk which helps the ribosome interact with GTP-bound translation factors. Is thus essential for accurate translation. This is Large ribosomal subunit protein bL12 from Bifidobacterium longum (strain DJO10A).